A 961-amino-acid chain; its full sequence is Glycine dehydrogenase (decarboxylating) (961 aa).

K709 is modified (N6-(pyridoxal phosphate)lysine).

It belongs to the GcvP family. As to quaternary structure, the glycine cleavage system is composed of four proteins: P, T, L and H. Requires pyridoxal 5'-phosphate as cofactor.

The enzyme catalyses N(6)-[(R)-lipoyl]-L-lysyl-[glycine-cleavage complex H protein] + glycine + H(+) = N(6)-[(R)-S(8)-aminomethyldihydrolipoyl]-L-lysyl-[glycine-cleavage complex H protein] + CO2. The glycine cleavage system catalyzes the degradation of glycine. The P protein binds the alpha-amino group of glycine through its pyridoxal phosphate cofactor; CO(2) is released and the remaining methylamine moiety is then transferred to the lipoamide cofactor of the H protein. The sequence is that of Glycine dehydrogenase (decarboxylating) from Teredinibacter turnerae (strain ATCC 39867 / T7901).